The chain runs to 205 residues: Ribonuclease HII (205 aa).

Residues 14–205 (SLISGIDEAG…SFRLKQLGEK (192 aa)) enclose the RNase H type-2 domain. The a divalent metal cation site is built by D20, E21, and D117.

The protein belongs to the RNase HII family. The cofactor is Mn(2+). Mg(2+) is required as a cofactor.

It is found in the cytoplasm. The enzyme catalyses Endonucleolytic cleavage to 5'-phosphomonoester.. Functionally, endonuclease that specifically degrades the RNA of RNA-DNA hybrids. This is Ribonuclease HII from Chlorobium phaeobacteroides (strain DSM 266 / SMG 266 / 2430).